The chain runs to 493 residues: MAAGPAFLIAGTTSDAGKSVITAGLCRAFARAGLRVAPFKAQNMSNNSAVTSDGGEIGRAQALQALACGLEPSVEFNPILLKPGPDNRARLVIRGREQGDVGAGDYIRHRHDLRGIAAAQLESLRERFDIVVCEGAGSPAEINLRATDVANFGLAQAAQLAVYIVGDIDRGGVLAHLFGTHAIISDEDRALIRGFVINKFRGHQELLEPGLVQLEELTGVETKAVIPFIDDIWIDAEDSLQSPVGRMVGPGGRHPLGTQRLSVAAIRLPRMLGVTDVEALAVEPGVTVTWVDDVDAVWDSDLVIIPGTTATVADLAWLRHRGLDRALGERATRGMPILGIGGGYQMMATTITDEGDSPSSVAGLALFDVHIALTPHNIMVNHGDGSYEVHHGQVRHHGEQTWIEGEGARREALFGTHRHGYLQDDPARRRFLTEVATHAGKPGFLVSPDTSFHGVRLQQLDRIADVLEEHWDLDQLLDEVSRPANAANTPETR.

Residues 260–427 enclose the GATase cobBQ-type domain; that stretch reads RLSVAAIRLP…RHGYLQDDPA (168 aa). The active site involves histidine 419.

It belongs to the CobB/CobQ family. CobQ subfamily.

It participates in cofactor biosynthesis; adenosylcobalamin biosynthesis. Functionally, catalyzes amidations at positions B, D, E, and G on adenosylcobyrinic A,C-diamide. NH(2) groups are provided by glutamine, and one molecule of ATP is hydrogenolyzed for each amidation. The polypeptide is Cobyric acid synthase (Corynebacterium efficiens (strain DSM 44549 / YS-314 / AJ 12310 / JCM 11189 / NBRC 100395)).